Here is a 559-residue protein sequence, read N- to C-terminus: Fanconi-associated nuclease 1 homolog (559 aa).

Mn(2+) is bound by residues Glu386, Asp507, Glu522, and Val523. A VRR-NUC domain is found at 443–555; sequence DGSYRDAIRC…MPVAVCYVRW (113 aa).

The protein belongs to the FAN1 family. It depends on Mn(2+) as a cofactor. The cofactor is Mg(2+).

It catalyses the reaction Hydrolytically removes 5'-nucleotides successively from the 3'-hydroxy termini of 3'-hydroxy-terminated oligonucleotides.. Its function is as follows. Nuclease required for the repair of DNA interstrand cross-links (ICL). Acts as a 5'-3' exonuclease that anchors at a cut end of DNA and cleaves DNA successively at every third nucleotide, allowing to excise an ICL from one strand through flanking incisions. Also has endonuclease activity toward 5'-flaps. The polypeptide is Fanconi-associated nuclease 1 homolog (Pseudomonas aeruginosa (strain ATCC 15692 / DSM 22644 / CIP 104116 / JCM 14847 / LMG 12228 / 1C / PRS 101 / PAO1)).